We begin with the raw amino-acid sequence, 467 residues long: UDP-N-acetylmuramate--L-alanine ligase (467 aa).

112–118 contributes to the ATP binding site; it reads GTHGKTT.

The protein belongs to the MurCDEF family.

Its subcellular location is the cytoplasm. It carries out the reaction UDP-N-acetyl-alpha-D-muramate + L-alanine + ATP = UDP-N-acetyl-alpha-D-muramoyl-L-alanine + ADP + phosphate + H(+). The protein operates within cell wall biogenesis; peptidoglycan biosynthesis. Functionally, cell wall formation. The sequence is that of UDP-N-acetylmuramate--L-alanine ligase from Azoarcus sp. (strain BH72).